The primary structure comprises 398 residues: DnaJ-like protein R260 (398 aa).

One can recognise a J domain in the interval 7-72 (DLYEILGLTP…EKRRVYDQYG (66 aa)). The CR-type zinc finger occupies 118-202 (KKTVKVTITV…CKGAGINKSE (85 aa)). 4 CXXCXGXG motif repeats span residues 131–138 (CDDCDATG), 147–154 (CKVCRGKG), 173–180 (CHGCQGKK), and 190–197 (CPSCKGAG). The segment at 364–398 (LRQINTDPSDESQDRDSEESYGGHGRPEGVGCAQQ) is disordered. Residues 371 to 382 (PSDESQDRDSEE) are compositionally biased toward acidic residues.

The cofactor is Zn(2+).

The polypeptide is DnaJ-like protein R260 (Acanthamoeba polyphaga mimivirus (APMV)).